Reading from the N-terminus, the 177-residue chain is tRNA-splicing endonuclease (177 aa).

Active-site residues include Y114, H123, and K154.

It belongs to the tRNA-intron endonuclease family. Archaeal short subfamily. Homotetramer; although the tetramer contains four active sites, only two participate in the cleavage. Therefore, it should be considered as a dimer of dimers.

The enzyme catalyses pretRNA = a 3'-half-tRNA molecule with a 5'-OH end + a 5'-half-tRNA molecule with a 2',3'-cyclic phosphate end + an intron with a 2',3'-cyclic phosphate and a 5'-hydroxyl terminus.. Functionally, endonuclease that removes tRNA introns. Cleaves pre-tRNA at the 5'- and 3'-splice sites to release the intron. The products are an intron and two tRNA half-molecules bearing 2',3' cyclic phosphate and 5'-OH termini. Recognizes a pseudosymmetric substrate in which 2 bulged loops of 3 bases are separated by a stem of 4 bp. The chain is tRNA-splicing endonuclease from Methanococcus maripaludis (strain DSM 14266 / JCM 13030 / NBRC 101832 / S2 / LL).